We begin with the raw amino-acid sequence, 93 residues long: Small ribosomal subunit protein uS19 (93 aa).

This sequence belongs to the universal ribosomal protein uS19 family.

Its function is as follows. Protein S19 forms a complex with S13 that binds strongly to the 16S ribosomal RNA. In Pediococcus pentosaceus (strain ATCC 25745 / CCUG 21536 / LMG 10740 / 183-1w), this protein is Small ribosomal subunit protein uS19.